Here is a 306-residue protein sequence, read N- to C-terminus: MFQNATDWTPTSTDPRDEQFGGVVEPVPTPSDADDYDAVLVGEPYDGAVIGRRGARDGPSAIRESLAGVKTHHFDAGAVSGVADLGDVVLPDGDVADTQAAVREAAAEVHETAALPVFVGGDNSLSYANVAPLVAADNGAVGVVSVDAHLDCRAVGDRGPTSGTPYRQLFDAGLDALAVVGARHFETTTTYAGFLRDQGGRIVTSDAVAADRDGSLDAAREALDGVDHVYVSVDIDVLDAAYPGASAPTPGGIQPRELFALVEALAASDDRIRGFELVETAPTLDTGGRTVDAAARTIAHFLAGAQ.

Over residues 1-13 (MFQNATDWTPTST) the composition is skewed to polar residues. The segment at 1–36 (MFQNATDWTPTSTDPRDEQFGGVVEPVPTPSDADDY) is disordered. 6 residues coordinate Mn(2+): asparagine 123, aspartate 147, histidine 149, aspartate 151, aspartate 234, and aspartate 236.

This sequence belongs to the arginase family. The cofactor is Mn(2+).

It carries out the reaction N-formimidoyl-L-glutamate + H2O = formamide + L-glutamate. The protein operates within amino-acid degradation; L-histidine degradation into L-glutamate; L-glutamate from N-formimidoyl-L-glutamate (hydrolase route): step 1/1. Its function is as follows. Catalyzes the conversion of N-formimidoyl-L-glutamate to L-glutamate and formamide. The chain is Formimidoylglutamase from Halobacterium salinarum (strain ATCC 29341 / DSM 671 / R1).